The chain runs to 549 residues: FERM domain-containing protein 1 (549 aa).

A disordered region spans residues 1–40; that stretch reads MAVPPRGRGIDPARTNPDTFPPSGARCMEPSPERPACSQQ. One can recognise an FERM domain in the interval 54 to 369; sequence RDVLVLLPSR…DELELDLASR (316 aa). Disordered regions lie at residues 377–400 and 422–464; these read SSQH…YTSG and HGLH…GQSA. A compositionally biased stretch (low complexity) spans 430–443; sequence SSSPRTSRSHPSTR. Over residues 444–462 the composition is skewed to polar residues; that stretch reads GDSQATRQEPCTQVRTRGQ.

The protein is FERM domain-containing protein 1 (FRMD1) of Homo sapiens (Human).